Consider the following 558-residue polypeptide: Dihydroxy-acid dehydratase (558 aa).

Asp81 contributes to the Mg(2+) binding site. [2Fe-2S] cluster is bound at residue Cys122. Residues Asp123 and Lys124 each coordinate Mg(2+). Lys124 carries the post-translational modification N6-carboxylysine. Cys195 serves as a coordination point for [2Fe-2S] cluster. Residue Glu447 participates in Mg(2+) binding. Ser473 functions as the Proton acceptor in the catalytic mechanism.

It belongs to the IlvD/Edd family. Homodimer. [2Fe-2S] cluster is required as a cofactor. It depends on Mg(2+) as a cofactor.

The enzyme catalyses (2R)-2,3-dihydroxy-3-methylbutanoate = 3-methyl-2-oxobutanoate + H2O. It catalyses the reaction (2R,3R)-2,3-dihydroxy-3-methylpentanoate = (S)-3-methyl-2-oxopentanoate + H2O. The protein operates within amino-acid biosynthesis; L-isoleucine biosynthesis; L-isoleucine from 2-oxobutanoate: step 3/4. Its pathway is amino-acid biosynthesis; L-valine biosynthesis; L-valine from pyruvate: step 3/4. Functions in the biosynthesis of branched-chain amino acids. Catalyzes the dehydration of (2R,3R)-2,3-dihydroxy-3-methylpentanoate (2,3-dihydroxy-3-methylvalerate) into 2-oxo-3-methylpentanoate (2-oxo-3-methylvalerate) and of (2R)-2,3-dihydroxy-3-methylbutanoate (2,3-dihydroxyisovalerate) into 2-oxo-3-methylbutanoate (2-oxoisovalerate), the penultimate precursor to L-isoleucine and L-valine, respectively. The sequence is that of Dihydroxy-acid dehydratase from Bacillus subtilis (strain 168).